The chain runs to 124 residues: Small ribosomal subunit protein eS6 (124 aa).

The protein belongs to the eukaryotic ribosomal protein eS6 family.

The polypeptide is Small ribosomal subunit protein eS6 (Thermoplasma acidophilum (strain ATCC 25905 / DSM 1728 / JCM 9062 / NBRC 15155 / AMRC-C165)).